Reading from the N-terminus, the 1076-residue chain is Structural maintenance of chromosomes protein 5 (1076 aa).

ATP is bound at residue 49-56 (GHNGSGKS). Positions 190–415 (STSIEDKCTT…KRDEEQNSQL (226 aa)) form a coiled coil. The span at 375 to 410 (EQKYSTAERDSRQEEDAIQKKSYEMRQLENKKRDEE) shows a compositional bias: basic and acidic residues. A disordered region spans residues 375–420 (EQKYSTAERDSRQEEDAIQKKSYEMRQLENKKRDEEQNSQLNRQDR). The tract at residues 416-617 (NRQDRYRVLQ…ANTWRDQFFK (202 aa)) is flexible hinge. Coiled-coil stretches lie at residues 627–713 (NSIL…EKKA) and 749–786 (KSRV…ALNH).

The protein belongs to the SMC family. SMC5 subfamily. In terms of assembly, interacts with smc-6. As to expression, expressed in the germline (at protein level).

The protein resides in the nucleus. The protein localises to the chromosome. In terms of biological role, core component of the smc-5/smc-6 complex. Functions in DNA double strand break repair by promoting sister-chromatid homologous recombination during meiosis. Acts in a DNA repair pathway for removal of ionizing radiation- and ultraviolet (UV) radiation-induced DNA lesions that is distinct from classical nucleotide excision repair and the translesion synthesis pathway. Also involved in the recovery of stalled replication forks. The polypeptide is Structural maintenance of chromosomes protein 5 (Caenorhabditis elegans).